A 308-amino-acid polypeptide reads, in one-letter code: Acetaldehyde dehydrogenase (308 aa).

NAD(+) is bound at residue 25 to 28 (TGAI). Catalysis depends on cysteine 139, which acts as the Acyl-thioester intermediate. Asparagine 279 serves as a coordination point for NAD(+).

The protein belongs to the acetaldehyde dehydrogenase family.

It carries out the reaction acetaldehyde + NAD(+) + CoA = acetyl-CoA + NADH + H(+). The sequence is that of Acetaldehyde dehydrogenase from Streptomyces griseus subsp. griseus (strain JCM 4626 / CBS 651.72 / NBRC 13350 / KCC S-0626 / ISP 5235).